A 122-amino-acid chain; its full sequence is Large ribosomal subunit protein uL14 (122 aa).

This sequence belongs to the universal ribosomal protein uL14 family. In terms of assembly, part of the 50S ribosomal subunit. Forms a cluster with proteins L3 and L19. In the 70S ribosome, L14 and L19 interact and together make contacts with the 16S rRNA in bridges B5 and B8.

Binds to 23S rRNA. Forms part of two intersubunit bridges in the 70S ribosome. The polypeptide is Large ribosomal subunit protein uL14 (Solidesulfovibrio magneticus (strain ATCC 700980 / DSM 13731 / RS-1) (Desulfovibrio magneticus)).